Here is a 1356-residue protein sequence, read N- to C-terminus: Fibronectin type III domain containing protein 3C1 (1356 aa).

Disordered regions lie at residues 303 to 341, 356 to 402, and 428 to 452; these read PRNMADNIPDTNTTDTITSSSAHTPSISTSNATFCSDNN, TYDE…SDVA, and NQKKSQSSNASLKEHNTEDRTQPGC. Low complexity predominate over residues 308–341; the sequence is DNIPDTNTTDTITSSSAHTPSISTSNATFCSDNN. Residues 370-393 are compositionally biased toward polar residues; it reads PSCTSQSASNPSVSENAHNPSSIN. Positions 439-448 are enriched in basic and acidic residues; it reads LKEHNTEDRT. Fibronectin type-III domains are found at residues 454 to 549, 553 to 648, 650 to 741, and 745 to 842; these read NIEK…TPGC, PPLA…TPPA, LPPK…TRPA, and CPNK…TLPP. Polar residues predominate over residues 825-838; it reads GQSRPSDVLTIQTP. Residues 825–894 are disordered; the sequence is GQSRPSDVLT…QDRKVHPSSE (70 aa). The segment covering 883–894 has biased composition (basic and acidic residues); the sequence is PHQDRKVHPSSE. Fibronectin type-III domains are found at residues 914-1007, 1017-1103, 1104-1199, and 1202-1299; these read PPSQ…TPGT, EVES…TKPL, PPEP…TKSP, and ALKA…TYKH. The interval 1299–1320 is disordered; the sequence is HHSGHGKGSGSKGKGNHNDKGE. Residues 1330 to 1350 form a helical membrane-spanning segment; sequence TFVLTLLIGFALIAVLCAVAV. Topologically, residues 1351-1356 are cytoplasmic; that stretch reads QYLLIN.

Belongs to the FNDC3 family.

Its subcellular location is the membrane. The protein is Fibronectin type III domain containing protein 3C1 (Fndc3c1) of Mus musculus (Mouse).